The chain runs to 364 residues: MKALILVGGFGTRLRPLTLTLPKPLVEFGNRPMILHQVESLAAAGVTDIVLAVNYRPDVMVAALKKYEEQYNVRIEFSVESEPLGTAGPLKLAEKILGKDDSPFFVLNSDIICDYPFKQLAEFHKKHGDEGTIVVTKVDEPSKYGVVVHKPNHPSRIDRFVEKPVEFVGNRINAGIYILNPSVLKRIELRPTSIEQETFPAICSDGQLHSFDLEGFWMDVGQPKDFLTGTCLYLTSLAKRNSKLLAPNSEPYVYGGNVMVDPSAKIGKNCRIGPNVVIGPNVVVGDGVRLQRCVLLENSKVKDHAWIKSTIVGWNSSVGKWARLENVTVLGDDVTIADEVYVNGGSILPHKSIKQNIDVPAIIM.

Belongs to the transferase hexapeptide repeat family.

Its subcellular location is the cytoplasm. It carries out the reaction alpha-D-mannose 1-phosphate + GTP + H(+) = GDP-alpha-D-mannose + diphosphate. It participates in nucleotide-sugar biosynthesis; GDP-alpha-D-mannose biosynthesis; GDP-alpha-D-mannose from alpha-D-mannose 1-phosphate (GTP route): step 1/1. Involved in cell wall synthesis where it is required for glycosylation. Involved in cell cycle progression through cell-size checkpoint. The sequence is that of Mannose-1-phosphate guanyltransferase (mpg1) from Aspergillus fumigatus (strain ATCC MYA-4609 / CBS 101355 / FGSC A1100 / Af293) (Neosartorya fumigata).